The primary structure comprises 295 residues: Zinc finger C2H2 protein ECU08_0560 (295 aa).

2 consecutive C2H2-type zinc fingers follow at residues 219–243 (FVCT…NLMH) and 249–273 (HKCR…YKVH).

This chain is Zinc finger C2H2 protein ECU08_0560, found in Encephalitozoon cuniculi (strain GB-M1) (Microsporidian parasite).